Here is a 493-residue protein sequence, read N- to C-terminus: Trichothecene 8-O-acetyltransferase (493 aa).

Polar residues predominate over residues 180-191; the sequence is QDQNENEVQQPK. Residues 180–199 are disordered; the sequence is QDQNENEVQQPKNLPDPDEP.

The protein operates within sesquiterpene biosynthesis; trichothecene biosynthesis. Trichothecene 8-O-acetyltransferase; part of 2-gene cluster involved in trichothecene C-8 modification that mediates the biosynthesis of T2-toxin. The biosynthesis of trichothecenes begins with the cyclization of farnesyl diphosphate to trichodiene and is catalyzed by the trichodiene synthase TRI5. Trichodiene undergoes a series of oxygenations catalyzed by the cytochrome P450 monooxygenase TRI4. TRI4 controls the addition of four oxygens at C-2, C-3, C-11, and the C-12, C-13-epoxide to form the intermediate isotrichotriol. Isotrichotriol then undergoes a non-enzymatic isomerization and cyclization to form isotrichodermol. During this process, the oxygen at the C-2 position becomes the pyran ring oxygen and the hydroxyl group at C-11 is lost. More complex type A trichothecenes are built by modifying isotrichodermol through a series of paired hydroxylation and acetylation or acylation steps. Isotrichodermol is converted to isotrichodermin by the acetyltransferase TRI101. TRI101 encodes a C-3 transacetylase that acts as a self-protection or resistance factor during biosynthesis and that the presence of a free C-3 hydroxyl group is a key component of Fusarium trichothecene phytotoxicity. A second hydroxyl group is added to C-15 by the trichothecene C-15 hydroxylase TRI11, producing 15-decalonectrin, which is then acetylated by TRI3, producing calonectrin. A third hydroxyl group is added at C-4 by the cytochrome P450 monooxygenase TRI13, converting calonectrin to 3,15-diacetoxyspirpenol, which is subsequently acetylated bythe acetyltransferase TRI7. A fourth hydroxyl group is added to C-8 by the cytochrome P450 monooxygenase TRI1, followed by the addition of an isovaleryl moiety by TRI16. Finally, the acetyl group is removed from the C-3 position by the trichothecene C-3 esterase TRI8 to produce T-2 toxin. This is Trichothecene 8-O-acetyltransferase from Fusarium sporotrichioides.